The following is a 435-amino-acid chain: Cytochrome c biogenesis protein Ccs1 (435 aa).

The next 3 membrane-spanning stretches (helical) occupy residues 17–37 (LSLS…GTII), 77–97 (NPCF…CTFS), and 163–183 (IAPI…LISL).

The protein belongs to the Ccs1/CcsB family. As to quaternary structure, may interact with CcsA.

Its subcellular location is the plastid. It localises to the chloroplast thylakoid membrane. Required during biogenesis of c-type cytochromes (cytochrome c6 and cytochrome f) at the step of heme attachment. The chain is Cytochrome c biogenesis protein Ccs1 from Gracilaria tenuistipitata var. liui (Red alga).